The primary structure comprises 550 residues: Pectinesterase 2.1 (550 aa).

The N-linked (GlcNAc...) asparagine glycan is linked to asparagine 179. The substrate site is built by threonine 312 and glutamine 342. Cysteines 331 and 358 form a disulfide. Aspartate 365 functions as the Proton donor in the catalytic mechanism. Residue aspartate 386 is the Nucleophile of the active site. A disulfide bridge connects residues cysteine 399 and cysteine 433. Substrate is bound by residues arginine 454 and tryptophan 456.

It in the N-terminal section; belongs to the PMEI family. In the C-terminal section; belongs to the pectinesterase family.

It localises to the secreted. It is found in the cell wall. It carries out the reaction [(1-&gt;4)-alpha-D-galacturonosyl methyl ester](n) + n H2O = [(1-&gt;4)-alpha-D-galacturonosyl](n) + n methanol + n H(+). It functions in the pathway glycan metabolism; pectin degradation; 2-dehydro-3-deoxy-D-gluconate from pectin: step 1/5. In terms of biological role, pectinesterase may play a role in cell wall metabolism during fruit growth and development prior to ripening and may be required for preparing cell walls for softening by polygalacturonase during fruit ripening. The sequence is that of Pectinesterase 2.1 (PME2.1) from Solanum lycopersicum (Tomato).